Here is a 99-residue protein sequence, read N- to C-terminus: Nucleoid-associated protein SZO_16661 (99 aa).

The protein belongs to the YbaB/EbfC family. As to quaternary structure, homodimer.

It is found in the cytoplasm. Its subcellular location is the nucleoid. Binds to DNA and alters its conformation. May be involved in regulation of gene expression, nucleoid organization and DNA protection. In Streptococcus equi subsp. zooepidemicus (strain H70), this protein is Nucleoid-associated protein SZO_16661.